Here is a 644-residue protein sequence, read N- to C-terminus: Exoribonuclease 2 (644 aa).

In terms of domain architecture, RNB spans 189–516 (RQDLTALNFV…NHRLLKAVIK (328 aa)). In terms of domain architecture, S1 motif spans 561 to 643 (NTRFAAEIID…ETRSIIARPA (83 aa)).

This sequence belongs to the RNR ribonuclease family. RNase II subfamily.

The protein localises to the cytoplasm. It carries out the reaction Exonucleolytic cleavage in the 3'- to 5'-direction to yield nucleoside 5'-phosphates.. In terms of biological role, involved in mRNA degradation. Hydrolyzes single-stranded polyribonucleotides processively in the 3' to 5' direction. In Salmonella newport (strain SL254), this protein is Exoribonuclease 2.